Reading from the N-terminus, the 317-residue chain is Olfactory receptor 10A5 (317 aa).

At 1 to 26 the chain is on the extracellular side; the sequence is MAIGNWTEISEFILMSFSSLPTEIQS. The N-linked (GlcNAc...) asparagine glycan is linked to N5. Residues 27-47 form a helical membrane-spanning segment; sequence LLFLTFLTIYLVTLKGNSLII. The Cytoplasmic segment spans residues 48 to 55; that stretch reads LVTLADPM. Residues 56 to 76 traverse the membrane as a helical segment; it reads LHSPMYFFLRNLSFLEIGFNL. At 77–100 the chain is on the extracellular side; it reads VIVPKMLGTLLAQDTTISFLGCAT. C98 and C190 are disulfide-bonded. Residues 101–121 form a helical membrane-spanning segment; sequence QMYFFFFFGVAECFLLATMAY. The Cytoplasmic portion of the chain corresponds to 122–140; the sequence is DRYVAICSPLHYPVIMNQR. The helical transmembrane segment at 141 to 161 threads the bilayer; sequence TRAKLAAASWFPGFPVATVQT. Residues 162–198 lie on the Extracellular side of the membrane; the sequence is TWLFSFPFCGTNKVNHFFCDSPPVLKLVCADTALFEI. A helical transmembrane segment spans residues 199–218; it reads YAIVGTILVVMIPCLLILCS. The Cytoplasmic portion of the chain corresponds to 219 to 238; it reads YTRIAAAILKIPSAKGKHKA. A helical transmembrane segment spans residues 239-259; that stretch reads FSTCSSHLLVVSLFYISSSLT. Residues 260–272 are Extracellular-facing; it reads YFWPKSNNSPESK. Residues 273–293 form a helical membrane-spanning segment; the sequence is KLLSLSYTVVTPMLNPIIYSL. Over 294-317 the chain is Cytoplasmic; the sequence is RNSEVKNALSRTFHKVLALRNCIP.

It belongs to the G-protein coupled receptor 1 family. In terms of tissue distribution, expressed in the tongue.

Its subcellular location is the cell membrane. Its function is as follows. Odorant receptor (Potential). May be involved in taste perception. The protein is Olfactory receptor 10A5 (OR10A5) of Homo sapiens (Human).